The sequence spans 505 residues: DDB1- and CUL4-associated factor 17 (505 aa).

2 helical membrane-spanning segments follow: residues 186 to 206 (VLLY…ILEI) and 222 to 242 (GILI…QAII).

As to quaternary structure, interacts with DDB1, CUL4A and CUL4B.

Its subcellular location is the membrane. The protein localises to the nucleus. It localises to the nucleolus. It participates in protein modification; protein ubiquitination. Its function is as follows. May function as a substrate receptor for CUL4-DDB1 E3 ubiquitin-protein ligase complex. This Rattus norvegicus (Rat) protein is DDB1- and CUL4-associated factor 17 (Dcaf17).